A 324-amino-acid polypeptide reads, in one-letter code: MSAAEMCAVAEQEPTATTHRPVLYGAALAALDVRPDGCYVDATYGRGGHARGILERLGPQGRLWVADRDPEALAHARETLADDPRCTVLGAELAELPRLLAEQGLAAGVDGLLADLGISSPQVDNPDRGFSFQRDGPLDMRMDPTTGESAAALLERLSARDIAGVLRQLGEERHAGRIARAIVAARDAGDPPRTTLALARLVEQAVPRREPGRHPATRTFQALRIAVNDELGQLDRFLEGVIDLLAPGGRLAVIAFHSLEDRRVKRFIRRASSVGDLPPSVPVPPAGCQPRLRPLGRDLRADEGEVAGNPRARSAVLRVAERLS.

S-adenosyl-L-methionine contacts are provided by residues 47 to 49 (GGH), D67, L96, D115, and Q122.

Belongs to the methyltransferase superfamily. RsmH family.

Its subcellular location is the cytoplasm. The enzyme catalyses cytidine(1402) in 16S rRNA + S-adenosyl-L-methionine = N(4)-methylcytidine(1402) in 16S rRNA + S-adenosyl-L-homocysteine + H(+). In terms of biological role, specifically methylates the N4 position of cytidine in position 1402 (C1402) of 16S rRNA. This Halorhodospira halophila (strain DSM 244 / SL1) (Ectothiorhodospira halophila (strain DSM 244 / SL1)) protein is Ribosomal RNA small subunit methyltransferase H.